An 86-amino-acid polypeptide reads, in one-letter code: Large ribosomal subunit protein bL31B (86 aa).

It belongs to the bacterial ribosomal protein bL31 family. Type B subfamily. In terms of assembly, part of the 50S ribosomal subunit.

The polypeptide is Large ribosomal subunit protein bL31B (Vibrio vulnificus (strain CMCP6)).